Consider the following 89-residue polypeptide: Small ribosomal subunit protein uS15 (89 aa).

Residues 1 to 21 show a composition bias toward basic and acidic residues; sequence MAISQERKNEIIKEYARHEGD. Residues 1 to 24 are disordered; sequence MAISQERKNEIIKEYARHEGDTGS.

It belongs to the universal ribosomal protein uS15 family. Part of the 30S ribosomal subunit. Forms a bridge to the 50S subunit in the 70S ribosome, contacting the 23S rRNA.

Functionally, one of the primary rRNA binding proteins, it binds directly to 16S rRNA where it helps nucleate assembly of the platform of the 30S subunit by binding and bridging several RNA helices of the 16S rRNA. Its function is as follows. Forms an intersubunit bridge (bridge B4) with the 23S rRNA of the 50S subunit in the ribosome. The sequence is that of Small ribosomal subunit protein uS15 from Enterococcus faecalis (strain ATCC 700802 / V583).